Here is a 614-residue protein sequence, read N- to C-terminus: FAD-linked oxidoreductase ffsJ (614 aa).

Residues 1-19 (MRLTRALTPAILALPAAHA) form the signal peptide. Asn30, Asn53, Asn72, and Asn114 each carry an N-linked (GlcNAc...) asparagine glycan. In terms of domain architecture, FAD-binding PCMH-type spans 119-301 (TGSLPAYYID…LSSTHRVEPE (183 aa)). N-linked (GlcNAc...) asparagine glycosylation is found at Asn314, Asn329, Asn461, Asn465, Asn478, and Asn514. The segment at 453–495 (NGHGRSNNNNSNNSSTSTSTSTSSKNGSVKPYAYGGKETTSST) is disordered. Residues 456 to 480 (GRSNNNNSNNSSTSTSTSTSSKNGS) show a composition bias toward low complexity.

Belongs to the oxygen-dependent FAD-linked oxidoreductase family. Requires FAD as cofactor.

The protein operates within mycotoxin biosynthesis. FAD-linked oxidoreductase; part of the gene cluster that mediates the biosynthesis of the cytotoxic leucine-containing cytochalasans, including aspochalasin C, aspochalasin E, TMC-169, flavichalasine F, aspergillin PZ, aspochalasin M and flavichalasine G. The first step in the pathway is catalyzed by the hybrid PKS-NRPS ffsA that utilizes 8 units of malonyl-CoA to iteratively assemble the octaketide chain before addition of L-leucine by the C-terminal NRPS modules. Because ffsA lacks a designated enoylreductase (ER) domain, the required activity is provided the enoyl reductase fssC. The methyltransferase (MT) domain of ffsA catalyzes the alpha-methylation at C10 and C14 using S-adenosyl-L-methionine as the methyl-donating cosubstrate. Reduction by the hydrolyase ffsE, followed by dehydration and intra-molecular Diels-Alder cyclization by the Diels-Alderase ffsF then yield the required isoindolone-fused macrocycle. A number of oxidative steps catalyzed by the tailoring cytochrome P450 monooxygenase ffsD, the FAD-linked oxidoreductase ffsJ and the short-chain dehydrogenase/reductase ffsI, are further required to afford the final products. The polypeptide is FAD-linked oxidoreductase ffsJ (Aspergillus flavipes).